We begin with the raw amino-acid sequence, 300 residues long: Tyrosine recombinase XerC (300 aa).

The Core-binding (CB) domain occupies 1–86 (MESVLDAFDQ…AVKTFTAWAV (86 aa)). The 188-residue stretch at 107–294 (TLPAVLRQDQ…TVARLRAVHD (188 aa)) folds into the Tyr recombinase domain. Residues arginine 151, lysine 175, histidine 246, arginine 249, and histidine 272 contribute to the active site. Residue tyrosine 281 is the O-(3'-phospho-DNA)-tyrosine intermediate of the active site.

It belongs to the 'phage' integrase family. XerC subfamily. As to quaternary structure, forms a cyclic heterotetrameric complex composed of two molecules of XerC and two molecules of XerD.

It localises to the cytoplasm. Site-specific tyrosine recombinase, which acts by catalyzing the cutting and rejoining of the recombining DNA molecules. The XerC-XerD complex is essential to convert dimers of the bacterial chromosome into monomers to permit their segregation at cell division. It also contributes to the segregational stability of plasmids. The chain is Tyrosine recombinase XerC from Mycobacterium sp. (strain KMS).